The primary structure comprises 152 residues: MFRGATLVNLDSKGRLSVPTRYRDQLIENATGQMVCTIDIHHPCLLLYPLPEWEIIEQKLSRLSSMNPVERRVQRLLLGHASECQMDSAGRLLIAPILRQHAGLTKEVMLVGQFNKFELWDETTWYQQVKEDIDAEQSVTETLSERLQDLSL.

SpoVT-AbrB domains follow at residues 5 to 52 (ATLV…PLPE) and 81 to 124 (ASEC…DETT).

The protein belongs to the MraZ family. In terms of assembly, forms oligomers.

The protein resides in the cytoplasm. Its subcellular location is the nucleoid. Functionally, negatively regulates its own expression and that of the subsequent genes in the proximal part of the division and cell wall (dcw) gene cluster. Acts by binding directly to DNA. May also regulate the expression of genes outside the dcw cluster. This is Transcriptional regulator MraZ from Citrobacter koseri (strain ATCC BAA-895 / CDC 4225-83 / SGSC4696).